The primary structure comprises 432 residues: Glutamyl-tRNA reductase (432 aa).

Substrate is bound by residues 55–58 (TCNR), S114, 119–121 (ETQ), and Q125. The Nucleophile role is filled by C56. 194–199 (GAGEMI) lines the NADP(+) pocket.

It belongs to the glutamyl-tRNA reductase family. In terms of assembly, homodimer.

It carries out the reaction (S)-4-amino-5-oxopentanoate + tRNA(Glu) + NADP(+) = L-glutamyl-tRNA(Glu) + NADPH + H(+). The protein operates within porphyrin-containing compound metabolism; protoporphyrin-IX biosynthesis; 5-aminolevulinate from L-glutamyl-tRNA(Glu): step 1/2. Catalyzes the NADPH-dependent reduction of glutamyl-tRNA(Glu) to glutamate 1-semialdehyde (GSA). The protein is Glutamyl-tRNA reductase of Burkholderia lata (strain ATCC 17760 / DSM 23089 / LMG 22485 / NCIMB 9086 / R18194 / 383).